A 494-amino-acid chain; its full sequence is NADH-quinone oxidoreductase subunit N (494 aa).

14 helical membrane-spanning segments follow: residues 9–29 (VIPEIFLAAATCAILLIDLFL), 36–56 (LTYVLSLATLVVCAVLSLSDF), 73–93 (PMSNLLKFCTYIAVGLTLVYS), 107–127 (LGGEFYILSLFTVLGQMVMMS), 131–151 (FLIIYLGLEIMSLSLYALVAF), 166–186 (FVLGALASGFLLYGISMLYGA), 209–229 (LIFGLVFVVAGLAFKLGAVPF), 241–261 (PTAVTLMLGGAPKLAAFAITI), 278–298 (MLTILSVLSMAIGNITAIMQT), 304–324 (LAYSTISQVGFILLGLLSGVV), 339–359 (MFYVITYVLTTLGMFGVIMLL), 382–402 (FAFVTLLLMFSLAGVPPVVGF), 416–436 (GQIWLAVVAVLFSLIGAFYYL), and 469–489 (ALLALGLVPGPLMTACAAAII).

It belongs to the complex I subunit 2 family. In terms of assembly, NDH-1 is composed of 14 different subunits. Subunits NuoA, H, J, K, L, M, N constitute the membrane sector of the complex.

The protein resides in the cell inner membrane. The catalysed reaction is a quinone + NADH + 5 H(+)(in) = a quinol + NAD(+) + 4 H(+)(out). NDH-1 shuttles electrons from NADH, via FMN and iron-sulfur (Fe-S) centers, to quinones in the respiratory chain. The immediate electron acceptor for the enzyme in this species is believed to be ubiquinone. Couples the redox reaction to proton translocation (for every two electrons transferred, four hydrogen ions are translocated across the cytoplasmic membrane), and thus conserves the redox energy in a proton gradient. The polypeptide is NADH-quinone oxidoreductase subunit N (Herminiimonas arsenicoxydans).